An 830-amino-acid chain; its full sequence is Protein PAM1 (830 aa).

Positions 379–400 (LQNSESTLKNEIKELQSQVLSL) form a coiled coil. Disordered stretches follow at residues 426 to 488 (DNSL…ETSL), 513 to 558 (ALQQ…SQPQ), 648 to 699 (NGMN…NYNI), and 727 to 757 (SRNADSAPCVNQLNSDSPPQLQSLSQNGTSK). Polar residues predominate over residues 433-444 (PNSNTNGISPSD). Residues 481–514 (LSRDETSLKERELEVRMKELELQERELELQRKAL) adopt a coiled-coil conformation. Composition is skewed to low complexity over residues 513 to 527 (ALQQQQQYQQRPPKQ) and 538 to 555 (SGNNNNKSYNPNRKSSYS). Positions 651-699 (NGTQSRLNSLSNQSTFRSQQGPPITQQKSFQNNGGSMRTNRIPSANYNI) are enriched in polar residues. Ser-659 and Ser-732 each carry phosphoserine. The span at 738–753 (QLNSDSPPQLQSLSQN) shows a compositional bias: low complexity. The residue at position 767 (Ser-767) is a Phosphoserine. A compositionally biased stretch (polar residues) spans 796–806 (AATANNISTMG). A disordered region spans residues 796-830 (AATANNISTMGDESRKEDVKEKKKKKFSFFGKRKK). Over residues 807 to 816 (DESRKEDVKE) the composition is skewed to basic and acidic residues. The span at 817–830 (KKKKKFSFFGKRKK) shows a compositional bias: basic residues.

It belongs to the PAM1/SVL3 family.

In terms of biological role, not known. It is a suppressor of protein phosphatase 2A depletion. The polypeptide is Protein PAM1 (PAM1) (Saccharomyces cerevisiae (strain ATCC 204508 / S288c) (Baker's yeast)).